We begin with the raw amino-acid sequence, 155 residues long: V-type proton ATPase 16 kDa proteolipid subunit c (155 aa).

At 1–10 (MSESKSGPEY) the chain is on the lumenal side. A helical membrane pass occupies residues 11-33 (ASFFAVMGASAAMVFSALGAAYG). Residues 34 to 55 (TAKSGTGIAAMSVMRPEQIMKS) are Cytoplasmic-facing. Residues 56–76 (IIPVVMAGIIAIYGLVVAVLI) form a helical membrane-spanning segment. Residues 77 to 92 (ANSLNDDISLYKSFLQ) lie on the Lumenal side of the membrane. Residues 93 to 114 (LGAGLSVGLSGLAAGFAIGIVG) form a helical membrane-spanning segment. Over 115-131 (DAGVRGTAQQPRLFVGM) the chain is Cytoplasmic. The helical transmembrane segment at 132–152 (ILILIFAEVLGLYGLIVALIL) threads the bilayer. The Lumenal portion of the chain corresponds to 153 to 155 (STK).

It belongs to the V-ATPase proteolipid subunit family. V-ATPase is a heteromultimeric enzyme made up of two complexes: the ATP-hydrolytic V1 complex and the proton translocation V0 complex. The V1 complex consists of three catalytic AB heterodimers that form a heterohexamer, three peripheral stalks each consisting of EG heterodimers, one central rotor including subunits D and F, and the regulatory subunits C and H. The proton translocation complex V0 consists of the proton transport subunit a, a ring of proteolipid subunits c9c'', rotary subunit d, subunits e and f, and the accessory subunits ATP6AP1/Ac45 and ATP6AP2/PRR. Interacts with the V0 complex V-ATPase subunit a4 ATP6V0A4. Interacts with LASS2. Interacts with RNF182; this interaction leads to ubiquitination and degradation via the proteasome pathway. In terms of assembly, (Microbial infection) Interacts with HTLV-1 accessory protein p12I. Ubiquitinated by RNF182, leading to its degradation via the ubiquitin-proteasome pathway.

It localises to the cytoplasmic vesicle. Its subcellular location is the clathrin-coated vesicle membrane. It is found in the secretory vesicle. The protein localises to the synaptic vesicle membrane. In terms of biological role, proton-conducting pore forming subunit of the V0 complex of vacuolar(H+)-ATPase (V-ATPase), a multisubunit enzyme composed of a peripheral complex (V1) that hydrolyzes ATP and a membrane integral complex (V0) that translocates protons. V-ATPase is responsible for acidifying and maintaining the pH of intracellular compartments, and in some cell types, it is targeted to the plasma membrane, where it is responsible for acidifying the extracellular environment. This is V-type proton ATPase 16 kDa proteolipid subunit c (ATP6V0C) from Homo sapiens (Human).